The chain runs to 1371 residues: MTEESSDVPRELIESIKDVIGRKIKISVKKKVKLEVKGDKVENKVLVLTSCRAFLVTARIPTKLELTFSYLEIHGVVCSKSAQMIVETEKCSISMKMASPEDVSEVLAHIGTCLRKIFPGLSPVRIMKKVSMEPSERLASLQALWDSQTVAEQGPCGGFSQMYACVCDWLGFSYREEVQWDVDTIYLTQDTRELNLQDFSHLDHRDLIPIIAALEYNQWFTKLSSKDLKLSTDVCEQILRVVSRSNRLEELVLENAGLRTDFAQKLASALAHNPNSGLHTINLAGNPLEDRGVSSLSIQFAKLPKGLKHLNLSKTSLSPKGVNSLSQSLSANPLTASTLVHLDLSGNVLRGDDLSHMYNFLAQPNAIVHLDLSNTECSLDMVCGALLRGCLQYLAVLNLSRTVFSHRKGKEVPPSFKQFFSSSLALMHINLSGTKLSPEPLKALLLGLACNHNLKGVSLDLSNCELRSGGAQVLEGCIAEIHNITSLDISDNGLESDLSTLIVWLSKNRSIQHLALGKNFNNMKSKNLTPVLDNLVQMIQDEESPLQSLSLADSKLKTEVTIIINALGSNTSLTKVDISGNGMGDMGAKMLAKALQINTKLRTVIWDKNNITAQGFQDIAVAMEKNYTLRFMPIPMYDASQALKTNPEKTEDALQKIENYLLRNHETRKYLQEQAYRLQQGIVTSTTQQMIDRICVKVQDHLNSLRNCGGDAIQEDLKSAERLMRDAKNSKTLLPNLYHVGGASWAGASGLLSSPIQETLESMAGEVTRVVDEQLKALLESMVDAAENLCPNVMKKAHIRQDLIHASTEKISIPRTFVKNVLLEQSGIDILNKISEVKLTVASFLSDRIVDEILDALSHCHHKLADHFSRRGKTLPQQESLEIELAEEKPVKRSIITVEELTEIERLEDLDTCMMTPKSKRKSIHSRMLRPVSRAFEMEFDLDKALEEVPIHIEDPPFPSLRQEKRSSGFISELPSEEGKKLEHFTKLRPKRNKKQQPTQAAVCAANIVSQDGEQNGLMGRVDEGVDEFFTKKVTKMDSKKWSTRGSESHELNEGGDEKKKRDSRKSSGFLNLIKSRSKSERPPTILMTEEPSSPKGAVRSPPVDCPRKDTKAAEHNGNSERIEEIKTPDSFEESQGEEIGKVERSDSKSSPQAGRRYGVQVMGSGLLAEMKAKQEKRAACAQKKLGNDAVSQDSSSPALSGVERSDGGGAVPKLHPGLPENRFGLGTPEKNTKAEPKAEAGSRSRSSSSTPTSPKPLLQSPKPSLAARPVIPQKPRTASRPDDIPDSPSSPKVALLPPVLKKVPSDKERDGQSSPQPSPRTFSQEVSRRSWGQQAQEYQEQKQRSSSKDGHQGSKSNDSGEEAEKEFIFV.

Met-1 carries the post-translational modification N-acetylmethionine. The residue at position 122 (Ser-122) is a Phosphoserine. 10 LRR repeats span residues 245–269, 275–298, 304–327, 336–363, 391–418, 423–447, 481–506, 543–566, 570–593, and 654–678; these read SNRL…LASA, NSGL…SLSI, PKGL…SLSQ, ASTL…FLAQ, LQYL…SFKQ, SLAL…LLLG, IHNI…VWLS, ESPL…IINA, NTSL…MLAK, and LQKI…AYRL. A coiled-coil region spans residues 710–734; the sequence is GDAIQEDLKSAERLMRDAKNSKTLL. Position 916 is a phosphothreonine (Thr-916). Disordered regions lie at residues 957 to 1000, 1036 to 1159, and 1172 to 1371; these read PFPS…QPTQ, KMDS…RRYG, and KAKQ…FIFV. The stretch at 958 to 981 is one LRR 11 repeat; that stretch reads FPSLRQEKRSSGFISELPSEEGKK. The tract at residues 958–1082 is inhibits capping activity of CAPZA2; the sequence is FPSLRQEKRS…LIKSRSKSER (125 aa). Ser-968 bears the Phosphoserine mark. Basic and acidic residues-rich tracts occupy residues 977 to 986 and 1036 to 1061; these read EEGKKLEHFT and KMDS…EKKK. The necessary for localization at the cell membrane stretch occupies residues 1055–1089; that stretch reads GGDEKKKRDSRKSSGFLNLIKSRSKSERPPTILMT. A phosphoserine mark is found at Ser-1067 and Ser-1094. 2 stretches are compositionally biased toward basic and acidic residues: residues 1106 to 1130 and 1139 to 1148; these read CPRK…KTPD and EIGKVERSDS. Positions 1190–1199 are enriched in polar residues; the sequence is AVSQDSSSPA. Thr-1228 is subject to Phosphothreonine. Basic and acidic residues predominate over residues 1231 to 1243; it reads KNTKAEPKAEAGS. Residues 1244 to 1265 are compositionally biased toward low complexity; that stretch reads RSRSSSSTPTSPKPLLQSPKPS. 6 positions are modified to phosphoserine: Ser-1280, Ser-1288, Ser-1291, Ser-1315, Ser-1324, and Ser-1331. Polar residues predominate over residues 1313–1326; that stretch reads QSSPQPSPRTFSQE. Residues 1340 to 1353 show a composition bias toward basic and acidic residues; that stretch reads QEQKQRSSSKDGHQ. A Phosphoserine modification is found at Ser-1360.

The protein belongs to the CARMIL family. Homodimer. Interacts (via C-terminus) with heterodimer capping protein (CP); this interaction uncaps barbed ends capped by CP, enhances barbed-end actin polymerization and promotes lamellipodial formation and cell migration. Interacts with heterodimer capping protein (CP). Interacts with MYO1E. Interacts with TRIO. As to expression, expressed in lung, placenta, small intestine, liver, thymus, colon, skeletal muscle, heart and brain. Higher expression in kidney.

It localises to the cytoplasm. Its subcellular location is the cytoskeleton. It is found in the cell membrane. The protein localises to the cell projection. The protein resides in the lamellipodium. Cell membrane-cytoskeleton-associated protein that plays a role in the regulation of actin polymerization at the barbed end of actin filaments. Prevents F-actin heterodimeric capping protein (CP) activity at the leading edges of migrating cells, and hence generates uncapped barbed ends and enhances actin polymerization, however, seems unable to nucleate filaments. Plays a role in lamellipodial protrusion formations and cell migration. The protein is F-actin-uncapping protein LRRC16A of Homo sapiens (Human).